We begin with the raw amino-acid sequence, 398 residues long: Phosphoglycerate kinase (398 aa).

Residues 21 to 23, arginine 36, 59 to 62, arginine 119, and arginine 157 each bind substrate; these read DFN and HLGR. ATP is bound by residues lysine 208, glycine 296, glutamate 327, and 354-357; that span reads GGDS.

It belongs to the phosphoglycerate kinase family. As to quaternary structure, monomer.

It is found in the cytoplasm. It catalyses the reaction (2R)-3-phosphoglycerate + ATP = (2R)-3-phospho-glyceroyl phosphate + ADP. The protein operates within carbohydrate degradation; glycolysis; pyruvate from D-glyceraldehyde 3-phosphate: step 2/5. This is Phosphoglycerate kinase from Streptococcus equi subsp. zooepidemicus (strain MGCS10565).